Reading from the N-terminus, the 335-residue chain is uncharacterized protein (335 aa).

Disordered regions lie at residues 152 to 179 (IQLP…TVND) and 252 to 271 (LDLF…SASL). Ser257 and Ser260 each carry phosphoserine. The segment covering 257 to 271 (SPSSENKSTAGSASL) has biased composition (polar residues).

This is an uncharacterized protein from Schizosaccharomyces pombe (strain 972 / ATCC 24843) (Fission yeast).